A 381-amino-acid chain; its full sequence is Cytochrome b (381 aa).

Transmembrane regions (helical) follow at residues 34–54 (FGSL…FLAM), 78–99 (WLIR…YFHI), 114–134 (WNIG…GYVL), and 179–199 (FFAF…IHIL). Positions 84 and 98 each coordinate heme b. Residues His183 and His197 each coordinate heme b. His202 is a binding site for a ubiquinone. The next 4 membrane-spanning stretches (helical) occupy residues 227–247 (YKDA…ALFL), 289–309 (LGGV…PFLH), 321–341 (LTQV…WIGG), and 348–368 (FILI…IAIP).

The protein belongs to the cytochrome b family. In terms of assembly, the cytochrome bc1 complex contains 3 respiratory subunits (MT-CYB, CYC1 and UQCRFS1), 2 core proteins (UQCRC1 and UQCRC2) and probably 6 low-molecular weight proteins. Heme b serves as cofactor.

It is found in the mitochondrion inner membrane. Its function is as follows. Component of the ubiquinol-cytochrome c reductase complex (complex III or cytochrome b-c1 complex) that is part of the mitochondrial respiratory chain. The b-c1 complex mediates electron transfer from ubiquinol to cytochrome c. Contributes to the generation of a proton gradient across the mitochondrial membrane that is then used for ATP synthesis. In Carcharodon carcharias (Great white shark), this protein is Cytochrome b (mt-cyb).